The chain runs to 354 residues: UDP-3-O-acylglucosamine N-acyltransferase (354 aa).

H247 functions as the Proton acceptor in the catalytic mechanism.

Belongs to the transferase hexapeptide repeat family. LpxD subfamily. As to quaternary structure, homotrimer.

The catalysed reaction is a UDP-3-O-[(3R)-3-hydroxyacyl]-alpha-D-glucosamine + a (3R)-hydroxyacyl-[ACP] = a UDP-2-N,3-O-bis[(3R)-3-hydroxyacyl]-alpha-D-glucosamine + holo-[ACP] + H(+). It functions in the pathway bacterial outer membrane biogenesis; LPS lipid A biosynthesis. Catalyzes the N-acylation of UDP-3-O-acylglucosamine using 3-hydroxyacyl-ACP as the acyl donor. Is involved in the biosynthesis of lipid A, a phosphorylated glycolipid that anchors the lipopolysaccharide to the outer membrane of the cell. This Chlamydia trachomatis serovar L2 (strain ATCC VR-902B / DSM 19102 / 434/Bu) protein is UDP-3-O-acylglucosamine N-acyltransferase.